A 108-amino-acid polypeptide reads, in one-letter code: MLKTTLLFFATALAEIIGCFLPYLWLKKSASAWLLLPAAASLMLFVWLLTLHPAASGRVYAAYGGVYVATALLWLRVVDGVKLSALDWLGAGVALAGMLIIVSGWRAA.

The next 4 membrane-spanning stretches (helical) occupy residues 6 to 26, 31 to 51, 61 to 81, and 85 to 105; these read LLFF…YLWL, SAWL…LLTL, AAYG…VDGV, and ALDW…VSGW.

This sequence belongs to the UPF0060 family.

Its subcellular location is the cell inner membrane. The polypeptide is UPF0060 membrane protein Spro_2289 (Serratia proteamaculans (strain 568)).